The chain runs to 649 residues: Serine/threonine-protein kinase par-4 (649 aa).

Residues 1–11 (MEGPSSSSVPT) are compositionally biased toward polar residues. The interval 1–132 (MEGPSSSSVP…DEEAETPEEQ (132 aa)) is disordered. Basic and acidic residues predominate over residues 45–55 (NTEKMEKEKKP). 2 stretches are compositionally biased toward acidic residues: residues 64 to 77 (PDYD…GSCE) and 117 to 129 (DDME…AETP). Residues 197–460 (YLWGGIIGTG…ISDVMQHPWF (264 aa)) enclose the Protein kinase domain. ATP contacts are provided by residues 203–211 (IGTGSYGKV) and K226. The active-site Proton acceptor is D324. The interval 548-649 (TLEKRPGDGP…CIFRSRTDSS (102 aa)) is disordered. A compositionally biased stretch (low complexity) spans 597–609 (AVEVVEAVAAPEA).

Belongs to the protein kinase superfamily. CAMK Ser/Thr protein kinase family. LKB1 subfamily. Mg(2+) serves as cofactor. Requires Mn(2+) as cofactor.

The protein resides in the cytoplasm. It localises to the cell cortex. It carries out the reaction L-seryl-[protein] + ATP = O-phospho-L-seryl-[protein] + ADP + H(+). The catalysed reaction is L-threonyl-[protein] + ATP = O-phospho-L-threonyl-[protein] + ADP + H(+). Required for cytoplasmic partitioning and asymmetric cell division in early embryogenesis. Phosphorylates and restricts the asymmetry effectors mex-5 and mex-6 to the anterior cytoplasm of the zygote and maintains these phosphorylations until fertilization. Phosphorylates and regulates aak-2 in response to oxidative stress. May also play a role in motility, behavioral response, regulation of lifespan and dauer formation through this pathway. This chain is Serine/threonine-protein kinase par-4, found in Caenorhabditis briggsae.